A 69-amino-acid chain; its full sequence is UPF0150 protein ssr1258 (69 aa).

Belongs to the UPF0150 family.

This is UPF0150 protein ssr1258 from Synechocystis sp. (strain ATCC 27184 / PCC 6803 / Kazusa).